We begin with the raw amino-acid sequence, 287 residues long: uncharacterized protein (287 aa).

This is an uncharacterized protein from Archaeoglobus fulgidus (strain ATCC 49558 / DSM 4304 / JCM 9628 / NBRC 100126 / VC-16).